The sequence spans 89 residues: U1-hexatoxin-Iw1e (89 aa).

Residues 1 to 18 (MLKFVVLIFVVIMASTFA) form the signal peptide. 5 disulfides stabilise this stretch: Cys-21/Cys-32, Cys-26/Cys-40, Cys-31/Cys-66, Cys-50/Cys-74, and Cys-68/Cys-81. The propeptide occupies 87-89 (RSE).

This sequence belongs to the MIT-like AcTx family. As to expression, expressed by the venom gland.

Its subcellular location is the secreted. In Illawarra wisharti (Illawarra funnel-web spider), this protein is U1-hexatoxin-Iw1e.